Reading from the N-terminus, the 434-residue chain is Transcriptional enhancer factor TEF-3 (434 aa).

The span at 1–28 shows a compositional bias: polar residues; the sequence is MEGTAGTITSNEWSSPTSPEGSTASGGS. Disordered stretches follow at residues 1 to 42 and 188 to 215; these read MEGT…AEGV and QPPL…PPWQ. Positions 36 to 112 form a DNA-binding region, TEA; sequence DNDAEGVWSP…QVLARRKARE (77 aa). The span at 201–213 shows a compositional bias: pro residues; it reads GPAPSPSAPPAPP.

As to quaternary structure, interacts with YAP1 and WWTR1/TAZ. Preferentially expressed in skeletal muscle. Lower levels in pancreas, placenta, and heart.

Its subcellular location is the nucleus. Functionally, transcription factor which plays a key role in the Hippo signaling pathway, a pathway involved in organ size control and tumor suppression by restricting proliferation and promoting apoptosis. The core of this pathway is composed of a kinase cascade wherein MST1/MST2, in complex with its regulatory protein SAV1, phosphorylates and activates LATS1/2 in complex with its regulatory protein MOB1, which in turn phosphorylates and inactivates YAP1 oncoprotein and WWTR1/TAZ. Acts by mediating gene expression of YAP1 and WWTR1/TAZ, thereby regulating cell proliferation, migration and epithelial mesenchymal transition (EMT) induction. Binds specifically and non-cooperatively to the Sph and GT-IIC 'enhansons' (5'-GTGGAATGT-3') and activates transcription. Binds to the M-CAT motif. This is Transcriptional enhancer factor TEF-3 (TEAD4) from Homo sapiens (Human).